We begin with the raw amino-acid sequence, 357 residues long: MKKMLALLVIAPLLVSCSGNKGNTDNEEFLKDTNAFDILMGQFANNIENIWGINEVLIAGPKDYVKYTDQYQTRSHINFDAGSITIETLSATNSVASLRQAIITTLLMGDDASNTDLYSDANDIQISREPLLYGQVLDNTGQAIRWEGRAASFADYLLQKRLQKRTSGLHVIWSVTIQLVPNHLDKRAHKYLPLVRKASERYGIEESLILAIMQTESSFNPYAVSRSDALGLMQVVQHSAGRDVFKMKGKWGQPSRSYLFDPEQNIDAGTAYLSILKNSYLAGIENPTSKRYAVITAYNGGAGSVLRVFSSDRDRAVGIINNMSPGDVYQTLTTKHPSGESRRYLNKVNSAQKNYRR.

An N-terminal signal peptide occupies residues 1–16 (MKKMLALLVIAPLLVS). Cys17 carries the N-palmitoyl cysteine lipid modification. Residue Cys17 is the site of S-diacylglycerol cysteine attachment.

The protein belongs to the transglycosylase Slt family.

The protein resides in the cell outer membrane. The catalysed reaction is Exolytic cleavage of the (1-&gt;4)-beta-glycosidic linkage between N-acetylmuramic acid (MurNAc) and N-acetylglucosamine (GlcNAc) residues in peptidoglycan, from either the reducing or the non-reducing ends of the peptidoglycan chains, with concomitant formation of a 1,6-anhydrobond in the MurNAc residue.. Murein-degrading enzyme. May play a role in recycling of muropeptides during cell elongation and/or cell division. The protein is Membrane-bound lytic murein transglycosylase C of Pectobacterium atrosepticum (strain SCRI 1043 / ATCC BAA-672) (Erwinia carotovora subsp. atroseptica).